The following is a 153-amino-acid chain: ORM1-like protein 1 (153 aa).

At 1–27 the chain is on the cytoplasmic side; sequence MNVGVAHSEVNPNTRVMNSRGIWLTYA. 2 helical membrane passes run 28-46 and 47-64; these read LGVG…FSVP and VVWT…YVFM. Topologically, residues 65–105 are cytoplasmic; it reads HAVKGTPFETPDQGKARLLTHWEQLDYGVQFTSSRKFFTIS. The next 2 membrane-spanning stretches (helical) occupy residues 106–123 and 124–140; these read PIIL…DTAH and FVIN…PKLP. At 141–153 the chain is on the cytoplasmic side; sequence QLHGVRIFGINKY.

The protein belongs to the ORM family. As to quaternary structure, ceramide-sensitive subunit of the serine palmitoyltransferase (SPT) complex, which is also composed of SPTLC1, SPTLC2/3 and SPTSSA/B.

Its subcellular location is the endoplasmic reticulum membrane. In terms of biological role, plays an essential role in the homeostatic regulation of sphingolipid de novo biosynthesis by modulating the activity of the serine palmitoyltransferase (SPT) in response to ceramide levels. When complexed to SPT, the binding of ceramides to its N-terminus stabilizes a conformation that block SPT substrate entry, hence preventing SPT catalytic activity. Through this mechanism, maintains ceramide levels at sufficient concentrations for the production of complex sphingolipids, but which prevents the accumulation of ceramides to levels that trigger apoptosis. The protein is ORM1-like protein 1 (ormdl1) of Danio rerio (Zebrafish).